The chain runs to 446 residues: ATP synthase subunit b-delta (446 aa).

Residues 1-168 (MSTFIGQLVG…PKGADVEYPL (168 aa)) form an ATP synthase subunit b region. A helical membrane pass occupies residues 4–24 (FIGQLVGFAAIVYLVWWYVVP). The interval 169–446 (LAKMRSASRR…LVAAEAALPD (278 aa)) is ATP synthase subunit delta.

The protein in the N-terminal section; belongs to the ATPase B chain family. In the C-terminal section; belongs to the ATPase delta chain family. In terms of assembly, F-type ATPases have 2 components, F(1) - the catalytic core - and F(0) - the membrane proton channel. F(1) has five subunits: alpha(3), beta(3), gamma(1), delta(1), epsilon(1). F(0) has three main subunits: a(1), b(2) and c(10-14). The alpha and beta chains form an alternating ring which encloses part of the gamma chain. F(1) is attached to F(0) by a central stalk formed by the gamma and epsilon chains, while a peripheral stalk is formed by the delta and b chains.

It localises to the cell membrane. Its function is as follows. F(1)F(0) ATP synthase produces ATP from ADP in the presence of a proton or sodium gradient. F-type ATPases consist of two structural domains, F(1) containing the extramembraneous catalytic core and F(0) containing the membrane proton channel, linked together by a central stalk and a peripheral stalk. During catalysis, ATP synthesis in the catalytic domain of F(1) is coupled via a rotary mechanism of the central stalk subunits to proton translocation. In terms of biological role, this fusion protein includes a component of the F(0) channel (subunit b) and of the F(1) subunit (subunit delta). Two copies of subunit b and one of delta together form the peripheral 'stator' stalk which links F(1) to F(0). The polypeptide is ATP synthase subunit b-delta (atpFH) (Mycobacterium leprae (strain Br4923)).